A 285-amino-acid chain; its full sequence is Shikimate dehydrogenase (NADP(+)) (285 aa).

Residues 20-22 (SIS) and serine 67 contribute to the shikimate site. The Proton acceptor role is filled by lysine 71. Glutamate 83 contacts NADP(+). Residues asparagine 92 and aspartate 107 each contribute to the shikimate site. Residues 129–133 (GAGGA) and methionine 227 contribute to the NADP(+) site. Residue tyrosine 229 participates in shikimate binding. Glycine 250 serves as a coordination point for NADP(+).

This sequence belongs to the shikimate dehydrogenase family. As to quaternary structure, homodimer.

It catalyses the reaction shikimate + NADP(+) = 3-dehydroshikimate + NADPH + H(+). The protein operates within metabolic intermediate biosynthesis; chorismate biosynthesis; chorismate from D-erythrose 4-phosphate and phosphoenolpyruvate: step 4/7. Its function is as follows. Involved in the biosynthesis of the chorismate, which leads to the biosynthesis of aromatic amino acids. Catalyzes the reversible NADPH linked reduction of 3-dehydroshikimate (DHSA) to yield shikimate (SA). The polypeptide is Shikimate dehydrogenase (NADP(+)) (Streptococcus gordonii (strain Challis / ATCC 35105 / BCRC 15272 / CH1 / DL1 / V288)).